The following is a 101-amino-acid chain: Apolipoprotein C-II (101 aa).

The first 22 residues, 1–22 (MGIRYLLVLVLVLLVLGCEVQG), serve as a signal peptide directing secretion. Residues 66-74 (TMDEKIREI) form a lipid binding region. Positions 78–101 (STAAVSTYAGIFTDQLLSMLKGDQ) are lipoprotein lipase cofactor.

This sequence belongs to the apolipoprotein C2 family. In terms of processing, proapolipoprotein C-II is synthesized as a sialic acid containing glycoprotein which is subsequently desialylated prior to its proteolytic processing. Proapolipoprotein C-II, the major form found in plasma undergoes proteolytic cleavage of its N-terminal hexapeptide to generate apolipoprotein C-II, which occurs as the minor form in plasma.

The protein resides in the secreted. Component of chylomicrons, very low-density lipoproteins (VLDL), low-density lipoproteins (LDL), and high-density lipoproteins (HDL) in plasma. Plays an important role in lipoprotein metabolism as an activator of lipoprotein lipase. Both proapolipoprotein C-II and apolipoprotein C-II can activate lipoprotein lipase. The sequence is that of Apolipoprotein C-II (APOC2) from Leptonychotes weddellii (Weddell seal).